The sequence spans 460 residues: tRNA modification GTPase MnmE (460 aa).

Positions 22, 83, and 122 each coordinate (6S)-5-formyl-5,6,7,8-tetrahydrofolate. Residues 219 to 381 (GIKTLIIGRP…LQQTILKKFQ (163 aa)) form the TrmE-type G domain. Position 229 (N229) interacts with K(+). Residues 229–234 (NVGKSS), 248–254 (SDISGTT), and 273–276 (DTAG) contribute to the GTP site. S233 serves as a coordination point for Mg(2+). S248, I250, and T253 together coordinate K(+). T254 contributes to the Mg(2+) binding site. K460 is a binding site for (6S)-5-formyl-5,6,7,8-tetrahydrofolate.

Belongs to the TRAFAC class TrmE-Era-EngA-EngB-Septin-like GTPase superfamily. TrmE GTPase family. As to quaternary structure, homodimer. Heterotetramer of two MnmE and two MnmG subunits. The cofactor is K(+).

It localises to the cytoplasm. In terms of biological role, exhibits a very high intrinsic GTPase hydrolysis rate. Involved in the addition of a carboxymethylaminomethyl (cmnm) group at the wobble position (U34) of certain tRNAs, forming tRNA-cmnm(5)s(2)U34. This is tRNA modification GTPase MnmE from Aster yellows witches'-broom phytoplasma (strain AYWB).